Reading from the N-terminus, the 353-residue chain is uncharacterized protein (353 aa).

7 residues coordinate Zn(2+): Cys40, His70, Cys100, Cys103, Cys106, Cys114, and Cys158.

It belongs to the zinc-containing alcohol dehydrogenase family. Zn(2+) is required as a cofactor.

This is an uncharacterized protein from Escherichia coli (strain K12).